The primary structure comprises 160 residues: MSDEAKEKRELESQKESSHNKSEKSVEPKPKRRRRRNYDDYDAEVAKEETKAKNGLTKSENNGTVEDSESDMDDAKLDALMGNEGEEEEDDLAEIDTSNIITSGRRTRGKVIDYKKTAEELDKKEPSTDSKDDVGYGEKEEDEEDEEDEEDEEDDDFKEQ.

The segment covering 1-29 has biased composition (basic and acidic residues); that stretch reads MSDEAKEKRELESQKESSHNKSEKSVEPK. The tract at residues 1–160 is disordered; the sequence is MSDEAKEKRE…DEEDDDFKEQ (160 aa). Ser2 carries the N-acetylserine modification. A compositionally biased stretch (polar residues) spans 56-65; sequence LTKSENNGTV. A phosphoserine mark is found at Ser68 and Ser70. Acidic residues predominate over residues 84–94; sequence EGEEEEDDLAE. Positions 87 to 108 are important for H2A.Z-H2B binding; it reads EEEDDLAEIDTSNIITSGRRTR. Over residues 110 to 138 the composition is skewed to basic and acidic residues; that stretch reads KVIDYKKTAEELDKKEPSTDSKDDVGYGE. The span at 139-160 shows a compositional bias: acidic residues; sequence KEEDEEDEEDEEDEEDDDFKEQ.

Belongs to the CHZ1 family. Forms a heterotrimer with H2A.Z-H2B, stabilizing the association of the histone dimer. Also, with a lower affinity, forms a heterotrimer with H2A-H2B.

Its subcellular location is the nucleus. Its function is as follows. Forms a chaperone-bound H2A.Z-H2B complex that acts as a source for SWR1 complex-dependent H2A to H2A.Z histone replacement in chromatin. This chain is Histone H2A.Z-specific chaperone CHZ1 (CHZ1), found in Saccharomyces cerevisiae (strain YJM789) (Baker's yeast).